Reading from the N-terminus, the 226-residue chain is Ribose-5-phosphate isomerase A (226 aa).

Residues 32 to 35 (TGST), 85 to 88 (DGAD), and 98 to 101 (KGGG) each bind substrate. The active-site Proton acceptor is the Glu107. Lys125 is a binding site for substrate.

The protein belongs to the ribose 5-phosphate isomerase family. Homodimer.

It carries out the reaction aldehydo-D-ribose 5-phosphate = D-ribulose 5-phosphate. The protein operates within carbohydrate degradation; pentose phosphate pathway; D-ribose 5-phosphate from D-ribulose 5-phosphate (non-oxidative stage): step 1/1. Catalyzes the reversible conversion of ribose-5-phosphate to ribulose 5-phosphate. This chain is Ribose-5-phosphate isomerase A, found in Saccharophagus degradans (strain 2-40 / ATCC 43961 / DSM 17024).